An 88-amino-acid polypeptide reads, in one-letter code: Large ribosomal subunit protein bL31B (88 aa).

It belongs to the bacterial ribosomal protein bL31 family. Type B subfamily. Part of the 50S ribosomal subunit.

The sequence is that of Large ribosomal subunit protein bL31B from Corynebacterium diphtheriae (strain ATCC 700971 / NCTC 13129 / Biotype gravis).